A 128-amino-acid chain; its full sequence is Large ribosomal subunit protein bL12 (128 aa).

Belongs to the bacterial ribosomal protein bL12 family. In terms of assembly, homodimer. Part of the ribosomal stalk of the 50S ribosomal subunit. Forms a multimeric L10(L12)X complex, where L10 forms an elongated spine to which 2 to 4 L12 dimers bind in a sequential fashion. Binds GTP-bound translation factors.

Functionally, forms part of the ribosomal stalk which helps the ribosome interact with GTP-bound translation factors. Is thus essential for accurate translation. In Corynebacterium glutamicum (strain R), this protein is Large ribosomal subunit protein bL12.